A 62-amino-acid polypeptide reads, in one-letter code: Dual specificity mitogen-activated protein kinase kinase 3 (62 aa).

The Protein kinase domain occupies 1–62 (GKIAVSIVKA…VAKTMDAGCK (62 aa)).

Belongs to the protein kinase superfamily. STE Ser/Thr protein kinase family. MAP kinase kinase subfamily. Activated by phosphorylation on Ser/Thr catalyzed by MAP kinase kinase kinases.

It catalyses the reaction L-seryl-[protein] + ATP = O-phospho-L-seryl-[protein] + ADP + H(+). It carries out the reaction L-threonyl-[protein] + ATP = O-phospho-L-threonyl-[protein] + ADP + H(+). The enzyme catalyses L-tyrosyl-[protein] + ATP = O-phospho-L-tyrosyl-[protein] + ADP + H(+). Its function is as follows. Catalyzes the concomitant phosphorylation of a threonine and a tyrosine residue in a Thr-Glu-Tyr sequence located in MAP kinases. The protein is Dual specificity mitogen-activated protein kinase kinase 3 (map2k3) of Xenopus laevis (African clawed frog).